The sequence spans 892 residues: MYYHSLSSYSILFFLFSLFHHLPCASSNQGLGWCESLFQCGNITADFPFWGGNRHKPCGHPLLELHCNNNNITSLYISNQEFYVRQINQTSNTLTLARSDLLGSFCSSYAYNTTTLPPEIFELSPTYKSLTVLYHCDPKLSYRSSYTCPALGTFSMSQSVDYQYSCQNSFTVNVPTSFHPEERGLNLTNLESALRKGFEVKLVIDEIPCQQCSSTRGICSFNGTTQSCCNATSPSGGVSCVPYQHSADEVYRRCSESFSCGSQRDLNYPLWKPGREECGHPNFKLNCSGGFAEINIASVKFRILDSYRSLIRLARSDYIGDLCPANPLTAPFIEKFLPVLELTGETELLTLYYGCRFNSSDIPANIYVGELGCDEGRSYYVTRNLSSPLLDSSRGVLNNLREMCKRNVSVPASGPALFDLQTRPNQDNLKMALDQGFRMLITSDCERCRGSGGACGYNQTSSGFGCYCKDGKCGYEYDDGFFRRHRRFIATLVRYTFIALGALTGVVIVFLVLLCPCFRVQIFRKRKTSDEVRLQKLKALIPLKHYTYAEVKKMTKSFTEVVGRGGFGIVYSGTLSDSSMVAVKVLKDSKGTDGEDFINEVASMSQTSHVNIVSLLGFCCEGSRRAIIYEFLGNGSLDKFISDKSSVNLDLKTLYGIALGVARGLEYLHYGCKTRIVHFDIKPQNVLLDDNLCPKVSDFGLAKLCEKKESILSLLDTRGTIGYIAPEMISRLYGSVSHKSDVYSYGMLVLEMIGARKKERFDQNSRSDGSSIYFPEWIYKDLEKANIKDIEKTENGGLIENGISSEEEEIARKMTLVGLWCIQSSPSDRPPMNKVVEMMEGSLDALEVPPRPVLQQISASSVSDSFWNSEESSSASDILVFSTNSKLESSSL.

The first 27 residues, 1-27, serve as a signal peptide directing secretion; the sequence is MYYHSLSSYSILFFLFSLFHHLPCASS. Residues 28-496 lie on the Extracellular side of the membrane; it reads NQGLGWCESL…RFIATLVRYT (469 aa). 12 N-linked (GlcNAc...) asparagine glycosylation sites follow: Asn-42, Asn-71, Asn-88, Asn-112, Asn-186, Asn-222, Asn-230, Asn-286, Asn-358, Asn-384, Asn-407, and Asn-458. Residues 497–517 form a helical membrane-spanning segment; sequence FIALGALTGVVIVFLVLLCPC. Residues 518–892 lie on the Cytoplasmic side of the membrane; it reads FRVQIFRKRK…TNSKLESSSL (375 aa). The residue at position 547 (Thr-547) is a Phosphothreonine. Residues 556-854 form the Protein kinase domain; that stretch reads KSFTEVVGRG…ALEVPPRPVL (299 aa). Residues 562 to 570 and Lys-584 each bind ATP; that span reads VGRGGFGIV. Tyr-629 carries the phosphotyrosine modification. Asp-680 (proton acceptor) is an active-site residue. Thr-717 and Thr-720 each carry phosphothreonine.

It belongs to the protein kinase superfamily. Ser/Thr protein kinase family.

The protein resides in the membrane. It catalyses the reaction L-seryl-[protein] + ATP = O-phospho-L-seryl-[protein] + ADP + H(+). It carries out the reaction L-threonyl-[protein] + ATP = O-phospho-L-threonyl-[protein] + ADP + H(+). The protein is LEAF RUST 10 DISEASE-RESISTANCE LOCUS RECEPTOR-LIKE PROTEIN KINASE-like 2.8 of Arabidopsis thaliana (Mouse-ear cress).